The following is a 98-amino-acid chain: NADH-ubiquinone oxidoreductase chain 4L (98 aa).

3 helical membrane passes run 1–21, 29–49, and 58–78; these read MPII…GMLI, SLLC…LMAL, and IVPI…LALL.

It belongs to the complex I subunit 4L family. In terms of assembly, core subunit of respiratory chain NADH dehydrogenase (Complex I) which is composed of 45 different subunits.

It is found in the mitochondrion inner membrane. The enzyme catalyses a ubiquinone + NADH + 5 H(+)(in) = a ubiquinol + NAD(+) + 4 H(+)(out). In terms of biological role, core subunit of the mitochondrial membrane respiratory chain NADH dehydrogenase (Complex I) which catalyzes electron transfer from NADH through the respiratory chain, using ubiquinone as an electron acceptor. Part of the enzyme membrane arm which is embedded in the lipid bilayer and involved in proton translocation. The chain is NADH-ubiquinone oxidoreductase chain 4L (MT-ND4L) from Colobus guereza (Mantled guereza).